A 152-amino-acid chain; its full sequence is Protein NrdI (152 aa).

It belongs to the NrdI family.

Probably involved in ribonucleotide reductase function. This Rhodococcus opacus (strain B4) protein is Protein NrdI.